The primary structure comprises 704 residues: Metabotropic glutamate receptor-like protein K (704 aa).

Positions 1 to 21 (MIKLILSIILIICFIINSIES) are cleaved as a signal peptide. Topologically, residues 22–383 (FKMITLTTGP…SKVEFQRSIQ (362 aa)) are extracellular. Asparagine 66, asparagine 104, asparagine 256, asparagine 286, asparagine 308, asparagine 337, asparagine 343, and asparagine 368 each carry an N-linked (GlcNAc...) asparagine glycan. A helical membrane pass occupies residues 384-404 (IGFSIVSGLLIGFVILMMIGI). At 405–419 (VKYQDTPSIRSASPS) the chain is on the cytoplasmic side. A helical membrane pass occupies residues 420 to 440 (FLNLTLLGGVIIFIGIIVWVA). At 441-455 (PISTHQCNARFWLVT) the chain is on the extracellular side. Residues 456–476 (IGFSTLIGSLVVKNIRIWLIF) traverse the membrane as a helical segment. Residues 477-492 (DNPELKIRTITNNQLY) are Cytoplasmic-facing. The helical transmembrane segment at 493–513 (PWVGLCLVINIVLMSIITTVG) threads the bilayer. The Extracellular portion of the chain corresponds to 514 to 541 (DLKAIEAQGIDSLGKFEYMTICKMNYTG). Residue asparagine 538 is glycosylated (N-linked (GlcNAc...) asparagine). Residues 542–562 (AATLYSILAYFGTLLLVGVFV) form a helical membrane-spanning segment. Residues 563–578 (SWKIRIVHIEEFSECT) are Cytoplasmic-facing. Residues 579 to 599 (AIAKTLYSISFCLFVIVPLMI) form a helical membrane-spanning segment. Over 600 to 608 (SPQDKQSET) the chain is Extracellular. The chain crosses the membrane as a helical span at residues 609–629 (IILCVTGIFITTGALLIFFLP). The Cytoplasmic segment spans residues 630–704 (KFWRIFGNEK…NESSLSNETK (75 aa)). 2 disordered regions span residues 657-677 (ARAESANRNNSSNSFGFSKSS) and 685-704 (SGIESLNDDSNESSLSNETK).

The protein in the N-terminal section; belongs to the BMP lipoprotein family. In the C-terminal section; belongs to the G-protein coupled receptor 3 family. GABA-B receptor subfamily.

The protein localises to the membrane. The sequence is that of Metabotropic glutamate receptor-like protein K (grlK) from Dictyostelium discoideum (Social amoeba).